The chain runs to 286 residues: 2-hydroxy-6-oxo-6-phenylhexa-2,4-dienoate hydrolase (286 aa).

Substrate is bound by residues 42 to 43 (GG), N51, N111, S180, and R190. The active-site Proton acceptor is the H265. Residue W266 coordinates substrate.

Belongs to the AB hydrolase superfamily. BphD family. Homodimer.

The enzyme catalyses 2,6-dioxo-6-phenylhexa-3-enoate + H2O = 2-oxopent-4-enoate + benzoate + H(+). Its pathway is xenobiotic degradation; biphenyl degradation; 2-hydroxy-2,4-pentadienoate and benzoate from biphenyl: step 4/4. In terms of biological role, catalyzes an unusual C-C bond hydrolysis of 2-hydroxy-6-oxo-6-phenylhexa-2,4-dienoic acid (HOPDA) to produce benzoic acid and 2-hydroxy-2,4-pentadienoic acid (HPD). The polypeptide is 2-hydroxy-6-oxo-6-phenylhexa-2,4-dienoate hydrolase (Polaromonas naphthalenivorans (strain CJ2)).